A 1204-amino-acid polypeptide reads, in one-letter code: ATP-dependent helicase/nuclease subunit A (1204 aa).

The 468-residue stretch at 2-469 (TNFTKEQDQA…IILADNFRST (468 aa)) folds into the UvrD-like helicase ATP-binding domain. Position 23–30 (23–30 (ASAGSGKT)) interacts with ATP. Positions 497-784 (GQLQFGASYY…KLMTIHASKG (288 aa)) constitute a UvrD-like helicase C-terminal domain.

This sequence belongs to the helicase family. AddA subfamily. Heterodimer of AddA and AddB/RexB. Requires Mg(2+) as cofactor.

The catalysed reaction is Couples ATP hydrolysis with the unwinding of duplex DNA by translocating in the 3'-5' direction.. It carries out the reaction ATP + H2O = ADP + phosphate + H(+). In terms of biological role, the heterodimer acts as both an ATP-dependent DNA helicase and an ATP-dependent, dual-direction single-stranded exonuclease. Recognizes the chi site generating a DNA molecule suitable for the initiation of homologous recombination. The AddA nuclease domain is required for chi fragment generation; this subunit has the helicase and 3' -&gt; 5' nuclease activities. The polypeptide is ATP-dependent helicase/nuclease subunit A (Lactobacillus gasseri (strain ATCC 33323 / DSM 20243 / BCRC 14619 / CIP 102991 / JCM 1131 / KCTC 3163 / NCIMB 11718 / NCTC 13722 / AM63)).